Reading from the N-terminus, the 184-residue chain is Large ribosomal subunit protein uL6 (184 aa).

The protein belongs to the universal ribosomal protein uL6 family. As to quaternary structure, part of the 50S ribosomal subunit.

Functionally, this protein binds to the 23S rRNA, and is important in its secondary structure. It is located near the subunit interface in the base of the L7/L12 stalk, and near the tRNA binding site of the peptidyltransferase center. The chain is Large ribosomal subunit protein uL6 from Thermosipho africanus (strain TCF52B).